Consider the following 547-residue polypeptide: (E)-beta-caryophyllene synthase (547 aa).

Mg(2+) contacts are provided by aspartate 302 and aspartate 306. The substrate site is built by aspartate 302, aspartate 306, arginine 443, and asparagine 446. The DDXXD motif signature appears at 302 to 306 (DDLYD). Mg(2+) contacts are provided by asparagine 446 and glutamate 454.

It belongs to the terpene synthase family. Monomer. It depends on Mg(2+) as a cofactor. Requires Mn(2+) as cofactor.

It is found in the cytoplasm. It catalyses the reaction (2E,6E)-farnesyl diphosphate = (-)-(E)-beta-caryophyllene + diphosphate. Its pathway is secondary metabolite biosynthesis; terpenoid biosynthesis. Component of the volatile terpenes biosynthesis pathways. Sesquiterpene synthase that converts farnesyl diphosphate to (E)-beta-caryophyllene. Involved in indirect defense by producing volatile signals attracting natural enemies of herbivores. The chain is (E)-beta-caryophyllene synthase from Zea mays (Maize).